The sequence spans 590 residues: Acetylcholinesterase (590 aa).

Positions 1–24 (MREMNLLVTSSLGVLLHLVVLCQA) are cleaved as a signal peptide. The N-linked (GlcNAc...) asparagine glycan is linked to Asn-83. The cysteines at positions 91 and 118 are disulfide-linked. Catalysis depends on Ser-224, which acts as the Acyl-ester intermediate. A disulfide bridge links Cys-278 with Cys-289. Glu-351 serves as the catalytic Charge relay system. A disulfide bridge links Cys-426 with Cys-545. Asn-440 carries N-linked (GlcNAc...) asparagine glycosylation. Catalysis depends on His-464, which acts as the Charge relay system. N-linked (GlcNAc...) asparagine glycosylation is found at Asn-481 and Asn-557. Ser-567 carries GPI-anchor amidated serine lipidation. The propeptide at 568–590 (SGTSSSKGIIFYVLFSILYLIFY) is removed in mature form.

Belongs to the type-B carboxylesterase/lipase family. As to quaternary structure, isoform H form is a homodimer; the asymmetric form is a disulfide-bonded oligomer composed of a collagenic subunit (Q) and a variable number of T catalytic subunits. In terms of processing, an interchain disulfide bond is present in what becomes position 596 of the T isoform. Found in the synapses and to a lower extent in extrajunctional areas of muscle and nerve, and on erythrocyte membranes.

It localises to the cell membrane. Its subcellular location is the synapse. It carries out the reaction acetylcholine + H2O = choline + acetate + H(+). Functionally, terminates signal transduction at the neuromuscular junction by rapid hydrolysis of the acetylcholine released into the synaptic cleft. May be involved in cell-cell interactions. The chain is Acetylcholinesterase (ache) from Torpedo marmorata (Marbled electric ray).